A 112-amino-acid polypeptide reads, in one-letter code: Protein Churchill (112 aa).

Zn(2+) contacts are provided by Cys-2, Cys-5, Cys-30, Cys-33, His-59, Cys-61, Cys-64, His-66, His-71, Cys-88, and Cys-91.

Belongs to the Churchill family.

Its function is as follows. Transcriptional activator that mediates FGF signaling during neural development. Plays a role in the regulation of cell movement. Does not bind DNA by itself. The polypeptide is Protein Churchill (Churc1) (Mus musculus (Mouse)).